A 31-amino-acid polypeptide reads, in one-letter code: Toxin BmKK12 (31 aa).

Position 1 is a pyrrolidone carboxylic acid (Gln1). Intrachain disulfides connect Cys4-Cys20, Cys10-Cys25, and Cys14-Cys27. Residue Pro31 is modified to Proline amide.

Belongs to the short scorpion toxin superfamily. Potassium channel inhibitor family. Alpha-KTx 17 subfamily. Post-translationally, the N-terminus is blocked. In terms of tissue distribution, expressed by the venom gland.

It localises to the secreted. Functionally, blocker of potassium channels (Kv). This Olivierus martensii (Manchurian scorpion) protein is Toxin BmKK12.